A 188-amino-acid polypeptide reads, in one-letter code: Probable DNA-directed RNA polymerase subunit delta (188 aa).

One can recognise an HTH HARE-type domain in the interval 14-83 (LSMIEVARAI…GDNKWGLRSW (70 aa)). A disordered region spans residues 117–188 (GDEDAIDYSD…EDDEDDEEEE (72 aa)).

This sequence belongs to the RpoE family. RNAP is composed of a core of 2 alpha, a beta and a beta' subunits. The core is associated with a delta subunit and one of several sigma factors.

Functionally, participates in both the initiation and recycling phases of transcription. In the presence of the delta subunit, RNAP displays an increased specificity of transcription, a decreased affinity for nucleic acids, and an increased efficiency of RNA synthesis because of enhanced recycling. This Streptococcus uberis (strain ATCC BAA-854 / 0140J) protein is Probable DNA-directed RNA polymerase subunit delta.